Here is a 323-residue protein sequence, read N- to C-terminus: Beta-ketoacyl-[acyl-carrier-protein] synthase III (323 aa).

Catalysis depends on residues C112 and H250. The interval 251–255 is ACP-binding; it reads QANQR. N280 is an active-site residue.

Belongs to the thiolase-like superfamily. FabH family. As to quaternary structure, homodimer.

The protein resides in the cytoplasm. It catalyses the reaction malonyl-[ACP] + acetyl-CoA + H(+) = 3-oxobutanoyl-[ACP] + CO2 + CoA. It functions in the pathway lipid metabolism; fatty acid biosynthesis. Catalyzes the condensation reaction of fatty acid synthesis by the addition to an acyl acceptor of two carbons from malonyl-ACP. Catalyzes the first condensation reaction which initiates fatty acid synthesis and may therefore play a role in governing the total rate of fatty acid production. Possesses both acetoacetyl-ACP synthase and acetyl transacylase activities. Its substrate specificity determines the biosynthesis of branched-chain and/or straight-chain of fatty acids. This is Beta-ketoacyl-[acyl-carrier-protein] synthase III from Oenococcus oeni (strain ATCC BAA-331 / PSU-1).